Consider the following 368-residue polypeptide: Alanine racemase (368 aa).

K35 functions as the Proton acceptor; specific for D-alanine in the catalytic mechanism. K35 is subject to N6-(pyridoxal phosphate)lysine. R130 lines the substrate pocket. The active-site Proton acceptor; specific for L-alanine is Y253. M305 provides a ligand contact to substrate.

Belongs to the alanine racemase family. The cofactor is pyridoxal 5'-phosphate.

It carries out the reaction L-alanine = D-alanine. It participates in amino-acid biosynthesis; D-alanine biosynthesis; D-alanine from L-alanine: step 1/1. In terms of biological role, catalyzes the interconversion of L-alanine and D-alanine. May also act on other amino acids. The protein is Alanine racemase (alr) of Cupriavidus metallidurans (strain ATCC 43123 / DSM 2839 / NBRC 102507 / CH34) (Ralstonia metallidurans).